Reading from the N-terminus, the 300-residue chain is Recombination-promoting nuclease RpnC (300 aa).

It belongs to the Rpn/YhgA-like nuclease family.

A low activity DNA endonuclease yielding 3'-hydroxyl ends. Upon expression enhances RecA-independent DNA recombination 2.9-fold, concomitantly reducing viability by 59% and inducing DNA damage as measured by induction of the SOS repair response. The sequence is that of Recombination-promoting nuclease RpnC from Escherichia coli (strain K12).